The chain runs to 150 residues: Globin-3 (150 aa).

Positions 11 to 150 constitute a Globin domain; the sequence is PLSAAEKTKI…MICILLRSAY (140 aa). Histidine 74 and histidine 106 together coordinate heme b.

It belongs to the globin family. Monomer.

The protein is Globin-3 of Petromyzon marinus (Sea lamprey).